We begin with the raw amino-acid sequence, 2267 residues long: Acetyl-CoA carboxylase 1 (2267 aa).

A Biotin carboxylation domain is found at 38 to 544 (PIHSVLVANN…HTGWLDSRIA (507 aa)). The 195-residue stretch at 190–384 (PESCNSIPEE…AAQVVVGMGV (195 aa)) folds into the ATP-grasp domain. Residue 216 to 273 (CQVVGYPAMIKASWGGGGKGIRKVHNDDEVRALFKQVQGEVPGSPIFIMKVASQSRHL) coordinates ATP. Residues glutamate 339, glutamate 353, and asparagine 355 each contribute to the Mg(2+) site. 3 residues coordinate Mn(2+): glutamate 339, glutamate 353, and asparagine 355. The active site involves arginine 357. Positions 671-745 (LQKEHDPSKL…QAADLIARLD (75 aa)) constitute a Biotinyl-binding domain. At lysine 712 the chain carries N6-biotinyllysine. In terms of domain architecture, CoA carboxyltransferase N-terminal spans 1502-1843 (PYKPLDAIDL…YVGGPLPIMK (342 aa)). A carboxyltransferase region spans residues 1502 to 2163 (PYKPLDAIDL…EDALAKEIRE (662 aa)). 3 residues coordinate CoA: arginine 1752, lysine 2053, and arginine 2055. The CoA carboxyltransferase C-terminal domain occupies 1847 to 2163 (PPDRPVTYFP…EDALAKEIRE (317 aa)).

Homodimer. Mg(2+) is required as a cofactor. Requires Mn(2+) as cofactor. Biotin serves as cofactor.

The protein localises to the cytoplasm. Its subcellular location is the cytosol. The enzyme catalyses hydrogencarbonate + acetyl-CoA + ATP = malonyl-CoA + ADP + phosphate + H(+). It catalyses the reaction N(6)-biotinyl-L-lysyl-[protein] + hydrogencarbonate + ATP = N(6)-carboxybiotinyl-L-lysyl-[protein] + ADP + phosphate + H(+). The protein operates within lipid metabolism; malonyl-CoA biosynthesis; malonyl-CoA from acetyl-CoA: step 1/1. Its function is as follows. Multifunctional enzyme that catalyzes the carboxylation of acetyl-CoA, forming malonyl-CoA, which is used in the plastid for fatty acid synthesis and in the cytosol in various biosynthetic pathways including fatty acid elongation. The polypeptide is Acetyl-CoA carboxylase 1 (ACC1) (Oryza sativa subsp. japonica (Rice)).